A 423-amino-acid chain; its full sequence is COP9 signalosome complex subunit 3 (423 aa).

One can recognise a PCI domain in the interval Asn197–Glu365. The span at Pro401–Ser410 shows a compositional bias: polar residues. Positions Pro401–Ser423 are disordered.

The protein belongs to the CSN3 family. As to quaternary structure, component of the CSN complex, probably composed of cops1, cops2, cops3, cops4, cops5, cops6, cops7, cops8 and cops9.

Its subcellular location is the cytoplasm. The protein resides in the nucleus. In terms of biological role, component of the COP9 signalosome complex (CSN), a complex involved in various cellular and developmental processes. The CSN complex is an essential regulator of the ubiquitin (Ubl) conjugation pathway by mediating the deneddylation of the cullin subunits of E3 ligase complexes, leading to modify the Ubl ligase activity. The chain is COP9 signalosome complex subunit 3 (cops3) from Xenopus laevis (African clawed frog).